We begin with the raw amino-acid sequence, 96 residues long: Nucleoid-associated protein CT_335 (96 aa).

This sequence belongs to the YbaB/EbfC family. In terms of assembly, homodimer.

The protein resides in the cytoplasm. The protein localises to the nucleoid. Its function is as follows. Binds to DNA and alters its conformation. May be involved in regulation of gene expression, nucleoid organization and DNA protection. This chain is Nucleoid-associated protein CT_335, found in Chlamydia trachomatis serovar D (strain ATCC VR-885 / DSM 19411 / UW-3/Cx).